Reading from the N-terminus, the 76-residue chain is Brevinin-2ISb (76 aa).

Residues 1 to 22 (MFTMKKSLLVLFFLGTISLSLC) form the signal peptide. A propeptide spans 23 to 41 (QEERNADEEDGGEATEEEV) (removed in mature form). Cysteine 70 and cysteine 76 form a disulfide bridge.

In terms of tissue distribution, expressed by the skin glands.

Its subcellular location is the secreted. In terms of biological role, has antimicrobial activity against Gram-negative bacterium E.coli ATCC 8739 (MIC=12.5 ug), against Gram positive bacteria S.aureus ATCC 6538 (MIC=6.3 ug) and B.subtilis ATCC 6633 (MIC=25 ug). Has no activity against methicillin-resistant S.aureus ATCC 43300 (MIC= ug) and fungus C.albicans ATCC 90028. The protein is Brevinin-2ISb of Odorrana ishikawae (Ishikawa's frog).